We begin with the raw amino-acid sequence, 147 residues long: Hemoglobin larval subunit beta-1 (147 aa).

The Globin domain occupies 3-147 (HLSADEKSAI…LVAALSHGYF (145 aa)). Heme b contacts are provided by His-64 and His-93.

Belongs to the globin family. Heterotetramer of two alpha chains and two beta chains. In terms of tissue distribution, red blood cells.

Functionally, this is a larval (tadpole) beta-globin. The polypeptide is Hemoglobin larval subunit beta-1 (Xenopus laevis (African clawed frog)).